Consider the following 306-residue polypeptide: Ankyrin repeat domain-containing protein 23 (306 aa).

Positions 41–90 (QEAVAREKLKLEEEKRKKLERFNSSRLTLDNLTDLENLVQRRRKKRQRHK) form a coiled coil. Residues 78-107 (LVQRRRKKRQRHKVPPREPESGAEPQPQVP) form a disordered region. The segment covering 80–91 (QRRRKKRQRHKV) has biased composition (basic residues). 4 ANK repeats span residues 144-173 (LHRT…AIEV), 177-206 (LDRT…QVNA), 210-239 (IWST…HINA), and 243-272 (EGDT…KLGV). Positions 179-196 (RTPVFWACRGGHLDILKR) are interaction with TTN.

As to quaternary structure, interacts with titin/TTN and MYPN.

It is found in the nucleus. Functionally, may be involved in the energy metabolism. Could be a molecular link between myofibrillar stretch-induced signaling pathways and muscle gene expression. This Mus musculus (Mouse) protein is Ankyrin repeat domain-containing protein 23 (Ankrd23).